Reading from the N-terminus, the 742-residue chain is Cullin-2 (742 aa).

The region spanning 672–734 is the Cullin neddylation domain; sequence DRRYAIDAAL…RDYLERDTDN (63 aa). A Glycyl lysine isopeptide (Lys-Gly) (interchain with G-Cter in NEDD8) cross-link involves residue lysine 686.

This sequence belongs to the cullin family. As to quaternary structure, interacts with SKIP17 and FBW2/SKIP18. In terms of processing, neddylated; which enhances the ubiquitination activity of E3 ubiquitin-protein ligase complexes.

Functionally, core component of multiple SCF (SKP1-CUL1-F-box protein) E3 ubiquitin-protein ligase complexes. Involved in ubiquitination and subsequent proteasomal degradation of target proteins. This chain is Cullin-2 (CUL2), found in Arabidopsis thaliana (Mouse-ear cress).